The sequence spans 578 residues: Serine/threonine-protein kinase D6PKL3 (578 aa).

The span at 1 to 24 (MDSSSSVVYVGSSSKSRNFQSKSK) shows a compositional bias: low complexity. The tract at residues 1-64 (MDSSSSVVYV…EVIESSVSSV (64 aa)) is disordered. Residues 25–34 (GSITSFSIDS) are compositionally biased toward polar residues. Residues 53-64 (SPEVIESSVSSV) are compositionally biased toward low complexity. A Protein kinase domain is found at 182–516 (FKLIKKLGGG…ATEIKQHPFF (335 aa)). ATP is bound by residues 188–196 (LGGGDIGNV) and Lys211. The active-site Proton acceptor is Asp307. An activation loop region spans residues 325 to 426 (DFDLSLRCAV…VGTHEYLAPE (102 aa)). Positions 575 to 578 (IDFF) match the PIF motif.

The protein belongs to the protein kinase superfamily. AGC Ser/Thr protein kinase family. In terms of tissue distribution, expressed predominantly in root tissue with lower levels found in leaf, stem, seed and flower.

Its subcellular location is the cell membrane. The catalysed reaction is L-seryl-[protein] + ATP = O-phospho-L-seryl-[protein] + ADP + H(+). It carries out the reaction L-threonyl-[protein] + ATP = O-phospho-L-threonyl-[protein] + ADP + H(+). In terms of biological role, protein kinase that regulates the auxin transport activity of PIN auxin efflux facilitators by direct phosphorylation. D6PK-mediated PIN phosphorylation promotes auxin transport in the hypocotyl and this is a prerequisite for PHOT1-dependent hypocotyl bending. This chain is Serine/threonine-protein kinase D6PKL3 (D6PKL3), found in Arabidopsis thaliana (Mouse-ear cress).